Reading from the N-terminus, the 471-residue chain is COP9 signalosome complex subunit 1 (471 aa).

A PCI domain is found at 249–411 (CFLLASFDHC…KILYARDVDQ (163 aa)). Positions 445–471 (HVKSPPREGSQGELTPANSQSRMSTNM) are disordered. Phosphoserine is present on residues S448 and S454. The segment covering 456-471 (GELTPANSQSRMSTNM) has biased composition (polar residues). A Phosphothreonine modification is found at T459. Position 463 is a phosphoserine (S463).

It belongs to the CSN1 family. Component of the CSN complex, composed of COPS1/GPS1, COPS2, COPS3, COPS4, COPS5, COPS6, COPS7 (COPS7A or COPS7B), COPS8 and COPS9. In the complex, it probably interacts directly with COPS2, COPS3, COPS4 and COPS5. Interacts directly with inositol kinase ITPK1. Interacts with CAPN8. Interacts with USP48. Interacts with ASB4; this interaction negatively regulates GPS1. In terms of tissue distribution, expressed in the base region of the oxyntic and pyloric mucosae.

It localises to the cytoplasm. The protein resides in the nucleus. Essential component of the COP9 signalosome complex (CSN), a complex involved in various cellular and developmental processes. The CSN complex is an essential regulator of the ubiquitin (Ubl) conjugation pathway by mediating the deneddylation of the cullin subunits of SCF-type E3 ligase complexes, leading to decrease the Ubl ligase activity of SCF-type complexes such as SCF, CSA or DDB2. The complex is also involved in phosphorylation of p53/TP53, c-jun/JUN, IkappaBalpha/NFKBIA, ITPK1 and IRF8/ICSBP, possibly via its association with CK2 and PKD kinases. CSN-dependent phosphorylation of TP53 and JUN promotes and protects degradation by the Ubl system, respectively. Suppresses G-protein- and mitogen-activated protein kinase-mediated signal transduction. This Mus musculus (Mouse) protein is COP9 signalosome complex subunit 1 (Gps1).